The following is a 173-amino-acid chain: dCTP deaminase, dUMP-forming (173 aa).

Residues 93 to 98, aspartate 111, 119 to 121, and glutamine 138 contribute to the dCTP site; these read RSSIGR and TLE. The active-site Proton donor/acceptor is the glutamate 121.

The protein belongs to the dCTP deaminase family. Homotrimer.

It catalyses the reaction dCTP + 2 H2O = dUMP + NH4(+) + diphosphate. Its pathway is pyrimidine metabolism; dUMP biosynthesis; dUMP from dCTP: step 1/1. Bifunctional enzyme that catalyzes both the deamination of dCTP to dUTP and the hydrolysis of dUTP to dUMP without releasing the toxic dUTP intermediate. The sequence is that of dCTP deaminase, dUMP-forming from Leptospira interrogans serogroup Icterohaemorrhagiae serovar copenhageni (strain Fiocruz L1-130).